We begin with the raw amino-acid sequence, 202 residues long: Large ribosomal subunit protein bL25 (202 aa).

Belongs to the bacterial ribosomal protein bL25 family. CTC subfamily. In terms of assembly, part of the 50S ribosomal subunit; part of the 5S rRNA/L5/L18/L25 subcomplex. Contacts the 5S rRNA. Binds to the 5S rRNA independently of L5 and L18.

Its function is as follows. This is one of the proteins that binds to the 5S RNA in the ribosome where it forms part of the central protuberance. This Paramagnetospirillum magneticum (strain ATCC 700264 / AMB-1) (Magnetospirillum magneticum) protein is Large ribosomal subunit protein bL25.